We begin with the raw amino-acid sequence, 598 residues long: MEFKLIAEYFDRLEKISSRIQLTALLTDLLKKSDKDVIDKVIYITQGKLWPDFFEKPEIGLGEKLMIKALSVSTNIKEDEIEKQLRILGDLGEVAYKLKRTNSSQNVLSYLGSTKVTKLTVEEVYESLSKIALSEGEGSRDMKIRSLAGLLKKADPLEAKYIIRFIDGRLRVGIGDATIMDALANVFGGGTAARPLIERAYNLRADLGNIAKLLAENGIETIKSIKPEVGIPIRPMLAERLTDPSEILAKVGGKGIVDYKYDGERAQIHKKGEKVYIFSRRLENITRQYPDVVEYIKNSIKSNEVILEGEIVAIDKESGEILPFQNLMHRKRKNDIGEAIKEYPVNVYLFDLMYNDGEDYTQKPLPDRREKLEEIVTQNDIVKVADHKYIDKVNELVEYFHQAISDGTEGVIVKSIGKDSIYQAGARGFLWIKLKKDYQSEMADSVDLVIVGAFYGRGKRGGKLSSLLMAAYDPDKDTFYTVCKVASGFSDAELEEVQKMLSEAKLDKKDPRVESEIQPDIWVKPKYVAEIIGAEITLSPLHTCCKGVVSEEAGLSIRFPRFIRWRDDKSVEEATTPNEILEMYQSRLKKKVEDITET.

D258 contacts ATP. Catalysis depends on K260, which acts as the N6-AMP-lysine intermediate. ATP contacts are provided by R265, R280, E310, F350, R427, and K433.

The protein belongs to the ATP-dependent DNA ligase family. The cofactor is Mg(2+).

It catalyses the reaction ATP + (deoxyribonucleotide)n-3'-hydroxyl + 5'-phospho-(deoxyribonucleotide)m = (deoxyribonucleotide)n+m + AMP + diphosphate.. DNA ligase that seals nicks in double-stranded DNA during DNA replication, DNA recombination and DNA repair. This chain is DNA ligase, found in Sulfolobus acidocaldarius (strain ATCC 33909 / DSM 639 / JCM 8929 / NBRC 15157 / NCIMB 11770).